A 622-amino-acid chain; its full sequence is Low affinity potassium transport system protein Kup (622 aa).

12 helical membrane-spanning segments follow: residues 9-29 (LSAV…TSPL), 46-66 (PDVV…VVSV), 101-121 (ILVV…VITP), 137-157 (PALD…LFVI), 165-185 (VGKL…LLGL), 213-233 (VSFF…ALYA), 247-267 (WFTV…ALLL), 276-296 (PFFL…ATLA), 337-357 (IYIP…IIGF), 363-383 (LAAA…ILFC), 395-415 (FLVV…FSAN), and 416-436 (VLKL…MFII).

The protein belongs to the HAK/KUP transporter (TC 2.A.72) family.

It localises to the cell inner membrane. It carries out the reaction K(+)(in) + H(+)(in) = K(+)(out) + H(+)(out). Its function is as follows. Responsible for the low-affinity transport of potassium into the cell. Likely operates as a K(+):H(+) symporter. In Yersinia pestis (strain Pestoides F), this protein is Low affinity potassium transport system protein Kup.